The chain runs to 440 residues: Endoglucanase B (440 aa).

The signal sequence occupies residues 1 to 33; it reads MNKRLSRGKISLLASVFVTTTFMGGVNVLASTA. Residue E179 is the Proton donor of the active site. Residue E305 is the Nucleophile of the active site. One can recognise a Dockerin domain in the interval 381–440; sequence TSYSLGDVNKDGKVNAIDYAVLKSILLGTNTNVDLSVSDMNKDGKVNALDLAVLKKMLLS.

Belongs to the glycosyl hydrolase 5 (cellulase A) family.

It carries out the reaction Endohydrolysis of (1-&gt;4)-beta-D-glucosidic linkages in cellulose, lichenin and cereal beta-D-glucans.. It catalyses the reaction Endohydrolysis of (1-&gt;4)-beta-D-xylosidic linkages in xylans.. Its function is as follows. Has endoglucanase activity on carboxymethyl-cellulose (CMC), xylan and lichenan, but not Avicel. The chain is Endoglucanase B (engB) from Clostridium cellulovorans (strain ATCC 35296 / DSM 3052 / OCM 3 / 743B).